The sequence spans 448 residues: Neurexin-1b-beta (448 aa).

Positions 1–38 are cleaved as a signal peptide; sequence MFGGWRLVVWQIFSEIITRRLGFWICLYFAALSVGMIS. Over 39-375 the chain is Extracellular; sequence GSEPLVRTRH…EVFRESNGTT (337 aa). A Laminin G-like domain is found at 71-269; sequence STYVFGRQGG…DPNVRMEGSV (199 aa). The helical transmembrane segment at 376–396 threads the bilayer; it reads GMVVGIVAGAALCILILLYAM. Over 397–448 the chain is Cytoplasmic; sequence YKYRNRDEGSYHVDESRNYICNSNGAALKEKNTADDDSGSKSKKNKNKEYYV. The segment covering 426–436 has biased composition (basic and acidic residues); sequence EKNTADDDSGS. The segment at 426–448 is disordered; sequence EKNTADDDSGSKSKKNKNKEYYV.

It belongs to the neurexin family.

Its subcellular location is the membrane. Functionally, neuronal cell surface protein that may be involved in cell recognition and cell adhesion. May play a role in formation or maintenance of synaptic junctions. The protein is Neurexin-1b-beta (nrxn1b) of Danio rerio (Zebrafish).